Consider the following 252-residue polypeptide: Ubiquinone/menaquinone biosynthesis C-methyltransferase UbiE (252 aa).

S-adenosyl-L-methionine is bound by residues T75, D96, and 123–124 (NA).

It belongs to the class I-like SAM-binding methyltransferase superfamily. MenG/UbiE family.

The catalysed reaction is a 2-demethylmenaquinol + S-adenosyl-L-methionine = a menaquinol + S-adenosyl-L-homocysteine + H(+). It catalyses the reaction a 2-methoxy-6-(all-trans-polyprenyl)benzene-1,4-diol + S-adenosyl-L-methionine = a 5-methoxy-2-methyl-3-(all-trans-polyprenyl)benzene-1,4-diol + S-adenosyl-L-homocysteine + H(+). Its pathway is quinol/quinone metabolism; menaquinone biosynthesis; menaquinol from 1,4-dihydroxy-2-naphthoate: step 2/2. It participates in cofactor biosynthesis; ubiquinone biosynthesis. Its function is as follows. Methyltransferase required for the conversion of demethylmenaquinol (DMKH2) to menaquinol (MKH2) and the conversion of 2-polyprenyl-6-methoxy-1,4-benzoquinol (DDMQH2) to 2-polyprenyl-3-methyl-6-methoxy-1,4-benzoquinol (DMQH2). In Methylobacterium nodulans (strain LMG 21967 / CNCM I-2342 / ORS 2060), this protein is Ubiquinone/menaquinone biosynthesis C-methyltransferase UbiE.